We begin with the raw amino-acid sequence, 255 residues long: H-2 class II histocompatibility antigen, E-K alpha chain (255 aa).

Positions 1-25 are cleaved as a signal peptide; that stretch reads MATIGALVLRFFFIAVLMSSQKSWA. The tract at residues 26-109 is alpha-1; that stretch reads IKEEHTIIQA…ERSNNTPDAN (84 aa). Residues 26–216 lie on the Extracellular side of the membrane; that stretch reads IKEEHTIIQA…EKTLLPETKE (191 aa). Residues 110–203 are alpha-2; it reads VAPEVTVLSR…GLEEPLRKHW (94 aa). The 93-residue stretch at 112 to 204 folds into the Ig-like C1-type domain; the sequence is PEVTVLSRSP…LEEPLRKHWE (93 aa). A disulfide bond links C132 and C188. A glycan (N-linked (GlcNAc...) asparagine) is linked at N143. Residues 204–216 form a connecting peptide region; the sequence is EFEEKTLLPETKE. A helical membrane pass occupies residues 217–242; sequence NVVCALGLFVGLVGIVVGIILIMKGI. Topologically, residues 243–255 are cytoplasmic; that stretch reads KKRNVVERRQGAL.

This sequence belongs to the MHC class II family.

The protein resides in the membrane. The sequence is that of H-2 class II histocompatibility antigen, E-K alpha chain from Mus musculus (Mouse).